Here is a 311-residue protein sequence, read N- to C-terminus: Aspartate carbamoyltransferase catalytic subunit (311 aa).

The carbamoyl phosphate site is built by R55 and T56. L-aspartate is bound at residue K85. Residues R106, H135, and Q138 each coordinate carbamoyl phosphate. L-aspartate-binding residues include R168 and R230. 2 residues coordinate carbamoyl phosphate: L268 and P269.

It belongs to the aspartate/ornithine carbamoyltransferase superfamily. ATCase family. Heterododecamer (2C3:3R2) of six catalytic PyrB chains organized as two trimers (C3), and six regulatory PyrI chains organized as three dimers (R2).

The enzyme catalyses carbamoyl phosphate + L-aspartate = N-carbamoyl-L-aspartate + phosphate + H(+). It functions in the pathway pyrimidine metabolism; UMP biosynthesis via de novo pathway; (S)-dihydroorotate from bicarbonate: step 2/3. Its function is as follows. Catalyzes the condensation of carbamoyl phosphate and aspartate to form carbamoyl aspartate and inorganic phosphate, the committed step in the de novo pyrimidine nucleotide biosynthesis pathway. This Proteus mirabilis (strain HI4320) protein is Aspartate carbamoyltransferase catalytic subunit.